The sequence spans 263 residues: Aminoglycoside 3'-phosphotransferase (263 aa).

D183 serves as the catalytic Proton acceptor.

It belongs to the aminoglycoside phosphotransferase family.

The enzyme catalyses kanamycin A + ATP = kanamycin 3'-phosphate + ADP + H(+). Resistance to kanamycin and structurally-related aminoglycosides, including amikacin. The polypeptide is Aminoglycoside 3'-phosphotransferase (rph) (Streptomyces ribosidificus).